The primary structure comprises 409 residues: Nucleoprotein (409 aa).

5 disordered regions span residues 1–32 (MASGKATGKTDAPAPVIKLGGPKPPKVGSSGN), 45–69 (NSHPPKFEGSGVPDNENLKTSQQHG), 122–145 (DVKSRSHQGTRDPDKFDQYPLRFS), 164–194 (RSGRSTAASSAASSRAPSRDGSRGRRSGSED), and 238–259 (VDQVFGPRTKGKEGNFGDDKMN). Over residues 15 to 31 (PVIKLGGPKPPKVGSSG) the composition is skewed to low complexity. Residues 29-160 (SSGNASWFQA…GNFRWDFIPL (132 aa)) form an RNA-binding region. The 126-residue stretch at 31–156 (GNASWFQAIK…GGPDGNFRWD (126 aa)) folds into the CoV N NTD domain. A compositionally biased stretch (basic and acidic residues) spans 122 to 138 (DVKSRSHQGTRDPDKFD). Over residues 164-179 (RSGRSTAASSAASSRA) the composition is skewed to low complexity. Composition is skewed to basic and acidic residues over residues 180-192 (PSRDGSRGRRSGS) and 247-259 (KGKEGNFGDDKMN). S190 and S192 each carry phosphoserine; by host. Positions 219–331 (ADEMAHRRYC…QCVDGVGTRP (113 aa)) constitute a CoV N CTD domain. The segment at 226-333 (RYCKRTIPPG…VDGVGTRPKD (108 aa)) is dimerization. A disulfide bridge links C320 with C323. The segment at 326 to 409 (GVGTRPKDDE…GDSALGENEL (84 aa)) is disordered. Over residues 341 to 357 (RSSSRPATRTSSPAPRQ) the composition is skewed to low complexity. Residues 358–367 (QRPKKEKKPK) are compositionally biased toward basic residues. Phosphothreonine; by host is present on T378. The residue at position 379 (S379) is a Phosphoserine; by host.

The protein belongs to the gammacoronavirus nucleocapsid protein family. In terms of assembly, homooligomer. Both monomeric and oligomeric forms interact with RNA. Interacts with protein M. Interacts with NSP3; this interaction serves to tether the genome to the newly translated replicase-transcriptase complex at a very early stage of infection. In terms of processing, ADP-ribosylated. The ADP-ribosylation is retained in the virion during infection. Phosphorylated on serine and threonine residues.

It localises to the virion. Its subcellular location is the host endoplasmic reticulum-Golgi intermediate compartment. It is found in the host Golgi apparatus. In terms of biological role, packages the positive strand viral genome RNA into a helical ribonucleocapsid (RNP) and plays a fundamental role during virion assembly through its interactions with the viral genome and membrane protein M. Plays an important role in enhancing the efficiency of subgenomic viral RNA transcription as well as viral replication. In Avian infectious bronchitis virus (strain Arkansas 99) (IBV), this protein is Nucleoprotein.